Consider the following 177-residue polypeptide: MKRIVLLRLGHRPERDKRITTHVGLTARLLGAEGMLLASNDPGIIATLEDVVSRWGGNFYIKNNVNYKQEIKEWKAAGGKVCHLSMYGINLPDVTDELKSCDKLMIVVGAEKVPPEIYQLADWNVAVGSQPHSEVAAVAITLDRIADGEPLKREFQNAELTIVPAERGKQVIENLRD.

S-adenosyl-L-methionine-binding positions include leucine 84 and 109 to 113 (GAEKV).

The protein belongs to the aTrm56 family. As to quaternary structure, homodimer.

It localises to the cytoplasm. It catalyses the reaction cytidine(56) in tRNA + S-adenosyl-L-methionine = 2'-O-methylcytidine(56) in tRNA + S-adenosyl-L-homocysteine + H(+). Its function is as follows. Specifically catalyzes the AdoMet-dependent 2'-O-ribose methylation of cytidine at position 56 in tRNAs. The sequence is that of tRNA (cytidine(56)-2'-O)-methyltransferase from Methanosarcina barkeri (strain Fusaro / DSM 804).